Consider the following 380-residue polypeptide: Queuine tRNA-ribosyltransferase (380 aa).

Catalysis depends on D96, which acts as the Proton acceptor. Residues 96–100 (DSGGF), D150, Q193, and G220 each bind substrate. The interval 251-257 (GVGAPDS) is RNA binding. The active-site Nucleophile is the D270. The segment at 275–279 (TRIAR) is RNA binding; important for wobble base 34 recognition. Residues C308, C310, C313, and H339 each contribute to the Zn(2+) site.

It belongs to the queuine tRNA-ribosyltransferase family. As to quaternary structure, homodimer. Within each dimer, one monomer is responsible for RNA recognition and catalysis, while the other monomer binds to the replacement base PreQ1. Zn(2+) is required as a cofactor.

The catalysed reaction is 7-aminomethyl-7-carbaguanine + guanosine(34) in tRNA = 7-aminomethyl-7-carbaguanosine(34) in tRNA + guanine. The protein operates within tRNA modification; tRNA-queuosine biosynthesis. Functionally, catalyzes the base-exchange of a guanine (G) residue with the queuine precursor 7-aminomethyl-7-deazaguanine (PreQ1) at position 34 (anticodon wobble position) in tRNAs with GU(N) anticodons (tRNA-Asp, -Asn, -His and -Tyr). Catalysis occurs through a double-displacement mechanism. The nucleophile active site attacks the C1' of nucleotide 34 to detach the guanine base from the RNA, forming a covalent enzyme-RNA intermediate. The proton acceptor active site deprotonates the incoming PreQ1, allowing a nucleophilic attack on the C1' of the ribose to form the product. After dissociation, two additional enzymatic reactions on the tRNA convert PreQ1 to queuine (Q), resulting in the hypermodified nucleoside queuosine (7-(((4,5-cis-dihydroxy-2-cyclopenten-1-yl)amino)methyl)-7-deazaguanosine). This is Queuine tRNA-ribosyltransferase from Streptococcus pneumoniae (strain Taiwan19F-14).